The sequence spans 241 residues: RAD9, HUS1, RAD1-interacting nuclear orphan protein 1 (241 aa).

The segment covering 1-10 (MPPRKKRRQA) has biased composition (basic residues). The tract at residues 1-27 (MPPRKKRRQAAQKPQLLFHQQPLEAPK) is disordered. Residues 56–62 (SWVSPQF) carry the RAD1-binding motif motif. 2 disordered regions span residues 68–134 (SWFP…PLVP) and 157–204 (IPPD…LVTD). Residues 72-87 (GKRKHHHRDHARRSSR) are compositionally biased toward basic residues. The segment covering 100-110 (ETPQSSASSAT) has biased composition (polar residues). Positions 129 to 136 (GRPLVPML) match the D-box motif. The KEN box motif lies at 177–181 (LRENS). The span at 181–193 (SLPSCSLHTSTPK) shows a compositional bias: polar residues.

In terms of assembly, interacts (when phosphorylated by PLK1) with POLQ; promoting POLQ recruitment to DNA damage sites. Interacts with RAD1; interaction is direct and promotes association with the 9-1-1 (RAD9-RAD1-HUS1) complex. Interacts with RAD18. Interacts with TOPBP1. Interacts with UBE2N. Post-translationally, phosphorylated by PLK1, promoting interaction with polymerase theta (POLQ). In terms of processing, ubiquitinated and degraded by the APC/C complex upon mitotic exit.

It localises to the nucleus. The protein localises to the chromosome. In terms of biological role, involved in microhomology-mediated end-joining (MMEJ) DNA repair by promoting recruitment of polymerase theta (POLQ) to DNA damage sites during mitosis. MMEJ is an alternative non-homologous end-joining (NHEJ) machinery that takes place during mitosis to repair double-strand breaks in DNA that originate in S-phase. Accumulates in M-phase; following phosphorylation by PLK1, interacts with POLQ, enabling its recruitment to double-strand breaks for subsequent repair. Also involved in the DNA damage response (DDR) signaling in response to genotoxic stresses such as ionizing radiation (IR) during the S phase. Recruited to sites of DNA damage through interaction with the 9-1-1 cell-cycle checkpoint response complex and TOPBP1 in a ATR-dependent manner. Required for the progression of the G1 to S phase transition. Plays a role in the stimulation of CHEK1 phosphorylation. The protein is RAD9, HUS1, RAD1-interacting nuclear orphan protein 1 (RHNO1) of Bos taurus (Bovine).